We begin with the raw amino-acid sequence, 199 residues long: GTP cyclohydrolase-2 (199 aa).

Residue 49 to 53 participates in GTP binding; sequence RIHSE. Residues Cys-54, Cys-65, and Cys-67 each contribute to the Zn(2+) site. GTP-binding positions include Gln-70, 92-94, and Thr-114; that span reads EGR. The active-site Proton acceptor is Asp-126. Arg-128 (nucleophile) is an active-site residue. The GTP site is built by Thr-149 and Lys-154.

Belongs to the GTP cyclohydrolase II family. In terms of assembly, homodimer. The cofactor is Zn(2+).

The enzyme catalyses GTP + 4 H2O = 2,5-diamino-6-hydroxy-4-(5-phosphoribosylamino)-pyrimidine + formate + 2 phosphate + 3 H(+). Its pathway is cofactor biosynthesis; riboflavin biosynthesis; 5-amino-6-(D-ribitylamino)uracil from GTP: step 1/4. Catalyzes the conversion of GTP to 2,5-diamino-6-ribosylamino-4(3H)-pyrimidinone 5'-phosphate (DARP), formate and pyrophosphate. In Blochmanniella floridana, this protein is GTP cyclohydrolase-2.